The primary structure comprises 220 residues: NAD(P)H-quinone oxidoreductase subunit M, chloroplastic (220 aa).

The N-terminal 37 residues, 1 to 37 (MATTASPFLSPAKLSLERRLPRATWTARRSVRFPPVR), are a transit peptide targeting the chloroplast. The tract at residues 20–91 (LPRATWTARR…PVQPLAESKN (72 aa)) is disordered. A compositionally biased stretch (low complexity) spans 34–44 (PPVRAQDQQQQ).

It belongs to the NDH complex subunit M family. As to quaternary structure, part of the chloroplast NDH complex, composed of a mixture of chloroplast and nucleus encoded subunits. Component of the NDH subcomplex A, at least composed of ndhH, ndhI, ndhJ, ndhK, ndhL, ndhM, ndhN and ndhO.

It localises to the plastid. The protein resides in the chloroplast thylakoid membrane. It carries out the reaction a plastoquinone + NADH + (n+1) H(+)(in) = a plastoquinol + NAD(+) + n H(+)(out). It catalyses the reaction a plastoquinone + NADPH + (n+1) H(+)(in) = a plastoquinol + NADP(+) + n H(+)(out). Its function is as follows. NDH shuttles electrons from NAD(P)H:plastoquinone, via FMN and iron-sulfur (Fe-S) centers, to quinones in the photosynthetic chain and possibly in a chloroplast respiratory chain. The immediate electron acceptor for the enzyme in this species is believed to be plastoquinone. Couples the redox reaction to proton translocation, and thus conserves the redox energy in a proton gradient. The protein is NAD(P)H-quinone oxidoreductase subunit M, chloroplastic of Oryza sativa subsp. indica (Rice).